Here is a 340-residue protein sequence, read N- to C-terminus: Glycerol-3-phosphate dehydrogenase [NAD(P)+] (340 aa).

NADPH is bound by residues serine 13, tryptophan 14, and lysine 108. Lysine 108, glycine 139, and serine 141 together coordinate sn-glycerol 3-phosphate. Alanine 143 lines the NADPH pocket. Sn-glycerol 3-phosphate contacts are provided by lysine 194, aspartate 247, serine 257, arginine 258, and asparagine 259. Lysine 194 (proton acceptor) is an active-site residue. Arginine 258 contributes to the NADPH binding site. 2 residues coordinate NADPH: valine 282 and glutamate 284.

This sequence belongs to the NAD-dependent glycerol-3-phosphate dehydrogenase family.

It is found in the cytoplasm. It carries out the reaction sn-glycerol 3-phosphate + NAD(+) = dihydroxyacetone phosphate + NADH + H(+). The catalysed reaction is sn-glycerol 3-phosphate + NADP(+) = dihydroxyacetone phosphate + NADPH + H(+). The protein operates within membrane lipid metabolism; glycerophospholipid metabolism. Its function is as follows. Catalyzes the reduction of the glycolytic intermediate dihydroxyacetone phosphate (DHAP) to sn-glycerol 3-phosphate (G3P), the key precursor for phospholipid synthesis. The protein is Glycerol-3-phosphate dehydrogenase [NAD(P)+] of Streptococcus sanguinis (strain SK36).